A 380-amino-acid chain; its full sequence is Cytochrome b (380 aa).

Transmembrane regions (helical) follow at residues 33-53 (FGSL…FLAM), 77-98 (WLIR…FLHV), 113-133 (WNMG…GYVL), and 178-198 (FFAF…VHLL). 2 residues coordinate heme: His83 and His97. His182 and His196 together coordinate heme. A ubiquinone is bound at residue His201. 4 helical membrane-spanning segments follow: residues 226-246 (VKDF…TLFF), 288-308 (LGGV…PLLH), 320-340 (ITQT…WIGG), and 347-367 (FIII…IFMP).

This sequence belongs to the cytochrome b family. In terms of assembly, the cytochrome bc1 complex contains 11 subunits: 3 respiratory subunits (MT-CYB, CYC1 and UQCRFS1), 2 core proteins (UQCRC1 and UQCRC2) and 6 low-molecular weight proteins (UQCRH/QCR6, UQCRB/QCR7, UQCRQ/QCR8, UQCR10/QCR9, UQCR11/QCR10 and a cleavage product of UQCRFS1). This cytochrome bc1 complex then forms a dimer. Requires heme as cofactor.

The protein resides in the mitochondrion inner membrane. Component of the ubiquinol-cytochrome c reductase complex (complex III or cytochrome b-c1 complex) that is part of the mitochondrial respiratory chain. The b-c1 complex mediates electron transfer from ubiquinol to cytochrome c. Contributes to the generation of a proton gradient across the mitochondrial membrane that is then used for ATP synthesis. In Microtus arvalis (Common vole), this protein is Cytochrome b (MT-CYB).